We begin with the raw amino-acid sequence, 286 residues long: Rhomboid-type serine protease 2 (286 aa).

Helical transmembrane passes span 18–38 (ITQY…LLVI), 66–86 (SFYL…VGLF), 99–119 (VFTG…FCIV), 122–142 (LLYP…FMSF), 164–183 (VSIP…MVLI), and 188–210 (FWGH…KFLY). Serine 133 acts as the Nucleophile in catalysis. The active site involves histidine 191.

This sequence belongs to the peptidase S54 family.

It localises to the golgi apparatus membrane. It is found in the golgi apparatus. The protein resides in the cis-Golgi network membrane. The catalysed reaction is Cleaves type-1 transmembrane domains using a catalytic dyad composed of serine and histidine that are contributed by different transmembrane domains.. In terms of biological role, probable rhomboid-type serine protease that catalyzes intramembrane proteolysis. The chain is Rhomboid-type serine protease 2 (RBD2) from Debaryomyces hansenii (strain ATCC 36239 / CBS 767 / BCRC 21394 / JCM 1990 / NBRC 0083 / IGC 2968) (Yeast).